Consider the following 163-residue polypeptide: Single-stranded DNA-binding protein 1 (163 aa).

Residues 1–104 form the SSB domain; it reads MINNVVLVGR…VVAESFQLLE (104 aa). The disordered stretch occupies residues 106-163; that stretch reads RATREGGSPNSYNNGGYNNAPSNNSYSASSQQTPNFSRDESPFGNSNPMDISDDDLPF. The segment covering 111-135 has biased composition (low complexity); sequence GGSPNSYNNGGYNNAPSNNSYSASS. Residues 158–163 carry the Important for interaction with partner proteins motif; that stretch reads DDDLPF.

Homotetramer.

Its function is as follows. Plays an important role in DNA replication, recombination and repair. Binds to ssDNA and to an array of partner proteins to recruit them to their sites of action during DNA metabolism. In Streptococcus agalactiae serotype III (strain NEM316), this protein is Single-stranded DNA-binding protein 1 (ssb1).